Here is a 1053-residue protein sequence, read N- to C-terminus: DNA-directed RNA polymerase subunit beta' (1053 aa).

Zn(2+) is bound by residues Cys-60, Cys-62, Cys-75, and Cys-78. Mg(2+) contacts are provided by Asp-449, Asp-451, and Asp-453. Residues Cys-818, Cys-892, Cys-899, and Cys-902 each coordinate Zn(2+).

It belongs to the RNA polymerase beta' chain family. The RNAP catalytic core consists of 2 alpha, 1 beta, 1 beta' and 1 omega subunit. When a sigma factor is associated with the core the holoenzyme is formed, which can initiate transcription. The cofactor is Mg(2+). Requires Zn(2+) as cofactor.

It catalyses the reaction RNA(n) + a ribonucleoside 5'-triphosphate = RNA(n+1) + diphosphate. Functionally, DNA-dependent RNA polymerase catalyzes the transcription of DNA into RNA using the four ribonucleoside triphosphates as substrates. The chain is DNA-directed RNA polymerase subunit beta' from Listeria grayi (Listeria murrayi).